The sequence spans 384 residues: Tryptophan--tRNA ligase (384 aa).

The 'HIGH' region signature appears at 81–89; that stretch reads PSGPMHIGH. Residues 252–256 carry the 'KMSKS' region motif; sequence KMSAS.

This sequence belongs to the class-I aminoacyl-tRNA synthetase family.

It localises to the cytoplasm. It catalyses the reaction tRNA(Trp) + L-tryptophan + ATP = L-tryptophyl-tRNA(Trp) + AMP + diphosphate + H(+). The chain is Tryptophan--tRNA ligase from Thermococcus onnurineus (strain NA1).